The primary structure comprises 331 residues: Lipoyl synthase (331 aa).

7 residues coordinate [4Fe-4S] cluster: C60, C65, C71, C86, C90, C93, and S301. In terms of domain architecture, Radical SAM core spans 72–290 (WSRGTATFML…REEGMQLGFL (219 aa)).

The protein belongs to the radical SAM superfamily. Lipoyl synthase family. [4Fe-4S] cluster is required as a cofactor.

Its subcellular location is the cytoplasm. It catalyses the reaction [[Fe-S] cluster scaffold protein carrying a second [4Fe-4S](2+) cluster] + N(6)-octanoyl-L-lysyl-[protein] + 2 oxidized [2Fe-2S]-[ferredoxin] + 2 S-adenosyl-L-methionine + 4 H(+) = [[Fe-S] cluster scaffold protein] + N(6)-[(R)-dihydrolipoyl]-L-lysyl-[protein] + 4 Fe(3+) + 2 hydrogen sulfide + 2 5'-deoxyadenosine + 2 L-methionine + 2 reduced [2Fe-2S]-[ferredoxin]. It functions in the pathway protein modification; protein lipoylation via endogenous pathway; protein N(6)-(lipoyl)lysine from octanoyl-[acyl-carrier-protein]: step 2/2. Its function is as follows. Catalyzes the radical-mediated insertion of two sulfur atoms into the C-6 and C-8 positions of the octanoyl moiety bound to the lipoyl domains of lipoate-dependent enzymes, thereby converting the octanoylated domains into lipoylated derivatives. The polypeptide is Lipoyl synthase (Deinococcus radiodurans (strain ATCC 13939 / DSM 20539 / JCM 16871 / CCUG 27074 / LMG 4051 / NBRC 15346 / NCIMB 9279 / VKM B-1422 / R1)).